The sequence spans 500 residues: Cytochrome P450 6B4 (500 aa).

Cys443 serves as a coordination point for heme.

Belongs to the cytochrome P450 family. Heme serves as cofactor.

It localises to the endoplasmic reticulum membrane. It is found in the microsome membrane. It catalyses the reaction an organic molecule + reduced [NADPH--hemoprotein reductase] + O2 = an alcohol + oxidized [NADPH--hemoprotein reductase] + H2O + H(+). Functionally, enables the insect to feed on furanocoumarin-producing plants and evolved as an adaptation for detoxification of xanthotoxin and other furanocoumarins. This isozyme metabolizes isopimpinellin, imperatorin, and bergapten at high rates, xanthotoxin and psoralen at intermediate rates and angelicin, sphondin, and trioxsalen only at very low rates. This is Cytochrome P450 6B4 (CYP6B4) from Papilio glaucus (Eastern tiger swallowtail butterfly).